A 341-amino-acid polypeptide reads, in one-letter code: tRNA N6-adenosine threonylcarbamoyltransferase (341 aa).

Positions 111 and 115 each coordinate Fe cation. Residues 134-138 (LVSGG), Asp167, Gly180, and Asn276 contribute to the substrate site. Asp304 provides a ligand contact to Fe cation.

This sequence belongs to the KAE1 / TsaD family. Fe(2+) serves as cofactor.

It is found in the cytoplasm. It carries out the reaction L-threonylcarbamoyladenylate + adenosine(37) in tRNA = N(6)-L-threonylcarbamoyladenosine(37) in tRNA + AMP + H(+). Functionally, required for the formation of a threonylcarbamoyl group on adenosine at position 37 (t(6)A37) in tRNAs that read codons beginning with adenine. Is involved in the transfer of the threonylcarbamoyl moiety of threonylcarbamoyl-AMP (TC-AMP) to the N6 group of A37, together with TsaE and TsaB. TsaD likely plays a direct catalytic role in this reaction. This chain is tRNA N6-adenosine threonylcarbamoyltransferase, found in Pseudomonas fluorescens (strain Pf0-1).